The chain runs to 587 residues: MSWARTHLRSALSLAAVSARGATTEGAARRWLSAWPAPQEPGMEYQDAVRMLNTLQTNASYLEQVKRQRSDPQAQLEAMEVYLARSGLQVEDLNQLNIIHVTGTKGKGSTCAFTERILRSYGLKTGFFSSPHLVQVRERIRINGKPISPELFTKHFWRLYHQLEEFKDDSHVAMPAYFRFLTLMAFHVFLQEKVDLAVVEVGIGGAYDCTNIIRKPVVCGVSSLGMDHTSLLGDTVEKIAWQKGGIFKPGVPAFTVLQPEGPLAVLRDRAQQTSCPLYLCPPLEALEDGGLPLTLGLEGEHQRSNAALALQLAHCWLEQQDHQDIRELKVSRPSMRWQLPLAPVFHPTSHMRHGLRDTEWPGRTQVLRRGPLTWYLDGAHTTSSVQACVRWYCQSLQRSKHPSGGPEVYVLLFNSTGDRDSAALLKLLQPCQFDYAVFCPNLTEVSSTENADQQNFTVTLDQVLLRCLQHQQHWSCLSEKQASPDFLSSPSPEPGRPGSLQPALRPPHSTGTNSLVFSCISHALQWISQGRDPIFQAPSPPRSLLSHPTASSGASILREAGAIHVLVTGSLHLVGGVLKLLEPSLSQ.

A mitochondrion-targeting transit peptide spans methionine 1 to glycine 42. ATP is bound at residue glycine 106–serine 109. Mg(2+) is bound by residues serine 130, glutamate 200, and histidine 228. Arginine 363 and aspartate 377 together coordinate ATP. A disordered region spans residues proline 484 to histidine 508. Serine 539 bears the Phosphoserine mark.

Belongs to the folylpolyglutamate synthase family. As to quaternary structure, monomer. It depends on a monovalent cation as a cofactor.

It localises to the mitochondrion inner membrane. The protein resides in the mitochondrion matrix. Its subcellular location is the cytoplasm. It carries out the reaction (6S)-5,6,7,8-tetrahydrofolyl-(gamma-L-Glu)(n) + L-glutamate + ATP = (6S)-5,6,7,8-tetrahydrofolyl-(gamma-L-Glu)(n+1) + ADP + phosphate + H(+). It participates in cofactor biosynthesis; tetrahydrofolylpolyglutamate biosynthesis. Its function is as follows. Catalyzes conversion of folates to polyglutamate derivatives allowing concentration of folate compounds in the cell and the intracellular retention of these cofactors, which are important substrates for most of the folate-dependent enzymes that are involved in one-carbon transfer reactions involved in purine, pyrimidine and amino acid synthesis. The sequence is that of Folylpolyglutamate synthase, mitochondrial (FPGS) from Cricetulus griseus (Chinese hamster).